Consider the following 875-residue polypeptide: Alanine--tRNA ligase (875 aa).

His567, His571, Cys669, and His673 together coordinate Zn(2+).

Belongs to the class-II aminoacyl-tRNA synthetase family. It depends on Zn(2+) as a cofactor.

The protein resides in the cytoplasm. The catalysed reaction is tRNA(Ala) + L-alanine + ATP = L-alanyl-tRNA(Ala) + AMP + diphosphate. Catalyzes the attachment of alanine to tRNA(Ala) in a two-step reaction: alanine is first activated by ATP to form Ala-AMP and then transferred to the acceptor end of tRNA(Ala). Also edits incorrectly charged Ser-tRNA(Ala) and Gly-tRNA(Ala) via its editing domain. The polypeptide is Alanine--tRNA ligase (Geobacter sulfurreducens (strain ATCC 51573 / DSM 12127 / PCA)).